Consider the following 96-residue polypeptide: MNIRPLHDRVIVKRSEVESKSAGGIVLTGSAAEQSTRGEVLAVGNGRILENGTVQPLDVKVGDIVIFNEGYGVKKEKIDGQEVLILSESDLMAVVE.

This sequence belongs to the GroES chaperonin family. Heptamer of 7 subunits arranged in a ring. Interacts with the chaperonin GroEL.

It localises to the cytoplasm. Functionally, together with the chaperonin GroEL, plays an essential role in assisting protein folding. The GroEL-GroES system forms a nano-cage that allows encapsulation of the non-native substrate proteins and provides a physical environment optimized to promote and accelerate protein folding. GroES binds to the apical surface of the GroEL ring, thereby capping the opening of the GroEL channel. The polypeptide is Co-chaperonin GroES (Shewanella loihica (strain ATCC BAA-1088 / PV-4)).